The sequence spans 397 residues: L-asparaginase-like protein GM15681 (397 aa).

The first 22 residues, 1-22, serve as a signal peptide directing secretion; that stretch reads MLAQSCCLRLLILLLLFTSICS. Disulfide bonds link C90–C95, C189–C205, and C344–C371.

It belongs to the Ntn-hydrolase family.

This is L-asparaginase-like protein GM15681 from Drosophila sechellia (Fruit fly).